Reading from the N-terminus, the 232-residue chain is Rho-related GTP-binding protein Rho6 (232 aa).

GTP-binding positions include 23 to 28 (QCGKTA), 38 to 45 (YPETYVPT), 67 to 71 (DTSGS), 125 to 128 (CKTD), and 169 to 170 (AF). The short motif at 42-50 (YVPTVFENY) is the Effector region element. Position 229 is a cysteine methyl ester (Cys-229). The S-geranylgeranyl cysteine moiety is linked to residue Cys-229. Positions 230–232 (SIM) are cleaved as a propeptide — removed in mature form.

Belongs to the small GTPase superfamily. Rho family. In terms of assembly, binds GRB7 and PLXNB1. Interacts with UBXD5. Interacts with PLXNA2. As to expression, mostly expressed in brain and liver.

The protein localises to the cell membrane. It is found in the cytoplasm. Its subcellular location is the cytoskeleton. Lacks intrinsic GTPase activity. Has a low affinity for GDP, and constitutively binds GTP. Controls rearrangements of the actin cytoskeleton. Induces the Rac-dependent neuritic process formation in part by disruption of the cortical actin filaments. Causes the formation of many neuritic processes from the cell body with disruption of the cortical actin filaments. This is Rho-related GTP-binding protein Rho6 (RND1) from Homo sapiens (Human).